The following is a 337-amino-acid chain: Cytoskeleton protein RodZ (337 aa).

Over 1-111 (MNTEATHDQN…LGKRRKKRDG (111 aa)) the chain is Cytoplasmic. The 53-residue stretch at 19 to 71 (LRNAREQLGLSQQAVAERLCLKVSTVRDIEEDKAPADLASTFLRGYIRSYARL) folds into the HTH cro/C1-type domain. Positions 30-49 (QQAVAERLCLKVSTVRDIEE) form a DNA-binding region, H-T-H motif. A helical; Signal-anchor for type II membrane protein transmembrane segment spans residues 112–132 (WLMTFTWLVLFVVVGLTGAWW). At 133 to 337 (WQNHKAQQEE…TLNAEQSPAQ (205 aa)) the chain is on the periplasmic side. Residues 155-220 (NAGGDSAQSV…QNAVVAPSQA (66 aa)) form a disordered region. Positions 160 to 192 (SAQSVPLDTSEAASQDSTPAPTAPVDSTATNAV) are enriched in polar residues. Over residues 193 to 217 (PQTPDASATTTAPAADAQQNAVVAP) the composition is skewed to low complexity.

This sequence belongs to the RodZ family.

The protein localises to the cell inner membrane. In terms of biological role, cytoskeletal protein that is involved in cell-shape control through regulation of the length of the long axis. This chain is Cytoskeleton protein RodZ, found in Citrobacter koseri (strain ATCC BAA-895 / CDC 4225-83 / SGSC4696).